The sequence spans 730 residues: Elongation factor 2 (730 aa).

Positions 19–228 (TKIRNIGIVA…TGVSFKDVYD (210 aa)) constitute a tr-type G domain. Residues 28–35 (AHIDHGKT), 94–98 (DTPGH), and 148–151 (NKVD) each bind GTP. At histidine 596 the chain carries Diphthamide.

This sequence belongs to the TRAFAC class translation factor GTPase superfamily. Classic translation factor GTPase family. EF-G/EF-2 subfamily.

It localises to the cytoplasm. Its function is as follows. Catalyzes the GTP-dependent ribosomal translocation step during translation elongation. During this step, the ribosome changes from the pre-translocational (PRE) to the post-translocational (POST) state as the newly formed A-site-bound peptidyl-tRNA and P-site-bound deacylated tRNA move to the P and E sites, respectively. Catalyzes the coordinated movement of the two tRNA molecules, the mRNA and conformational changes in the ribosome. The sequence is that of Elongation factor 2 from Methanosarcina barkeri (strain Fusaro / DSM 804).